The primary structure comprises 141 residues: Brain ribonuclease (141 aa).

The segment at 1–25 is disordered; sequence KETAAAKFRRQHMDSGSSSSSNSNY. The substrate site is built by Lys7 and Arg10. His12 acts as the Proton acceptor in catalysis. Low complexity predominate over residues 15-24; the sequence is SGSSSSSNSN. Cystine bridges form between Cys26–Cys84, Cys40–Cys95, Cys58–Cys110, and Cys65–Cys72. 41 to 45 is a substrate binding site; that stretch reads KPVNT. The N-linked (GlcNAc...) asparagine glycan is linked to Asn62. Residues Lys66 and Arg85 each contribute to the substrate site. The Proton donor role is filled by His119. Thr129 carries O-linked (GalNAc...) threonine glycosylation.

Belongs to the pancreatic ribonuclease family.

The protein localises to the secreted. The sequence is that of Brain ribonuclease (BRN) from Giraffa camelopardalis (Giraffe).